Consider the following 940-residue polypeptide: Isoleucine--tRNA ligase (940 aa).

The 'HIGH' region motif lies at 58-68; sequence PYANGSIHIGH. An L-isoleucyl-5'-AMP-binding site is contributed by Glu-564. Residues 605 to 609 carry the 'KMSKS' region motif; sequence KMSKS. Lys-608 is an ATP binding site. 4 residues coordinate Zn(2+): Cys-903, Cys-906, Cys-923, and Cys-926.

The protein belongs to the class-I aminoacyl-tRNA synthetase family. IleS type 1 subfamily. Monomer. Zn(2+) is required as a cofactor.

The protein resides in the cytoplasm. It carries out the reaction tRNA(Ile) + L-isoleucine + ATP = L-isoleucyl-tRNA(Ile) + AMP + diphosphate. Its function is as follows. Catalyzes the attachment of isoleucine to tRNA(Ile). As IleRS can inadvertently accommodate and process structurally similar amino acids such as valine, to avoid such errors it has two additional distinct tRNA(Ile)-dependent editing activities. One activity is designated as 'pretransfer' editing and involves the hydrolysis of activated Val-AMP. The other activity is designated 'posttransfer' editing and involves deacylation of mischarged Val-tRNA(Ile). This chain is Isoleucine--tRNA ligase, found in Shewanella baltica (strain OS195).